The following is a 196-amino-acid chain: Probable malonic semialdehyde reductase RutE (196 aa).

This sequence belongs to the nitroreductase family. HadB/RutE subfamily. The cofactor is FMN.

The catalysed reaction is 3-hydroxypropanoate + NADP(+) = 3-oxopropanoate + NADPH + H(+). May reduce toxic product malonic semialdehyde to 3-hydroxypropionic acid, which is excreted. The sequence is that of Probable malonic semialdehyde reductase RutE from Enterobacter sp. (strain 638).